Consider the following 421-residue polypeptide: UPF0415 protein C7orf25 (421 aa).

The protein belongs to the UPF0415 family.

This chain is UPF0415 protein C7orf25 (C7orf25), found in Homo sapiens (Human).